Reading from the N-terminus, the 188-residue chain is Elongation factor P (188 aa).

Position 34 is an N6-(3,6-diaminohexanoyl)-5-hydroxylysine (K34).

The protein belongs to the elongation factor P family. May be beta-lysylated on the epsilon-amino group of Lys-34 by the combined action of EpmA and EpmB, and then hydroxylated on the C5 position of the same residue by EpmC (if this protein is present). Lysylation is critical for the stimulatory effect of EF-P on peptide-bond formation. The lysylation moiety may extend toward the peptidyltransferase center and stabilize the terminal 3-CCA end of the tRNA. Hydroxylation of the C5 position on Lys-34 may allow additional potential stabilizing hydrogen-bond interactions with the P-tRNA.

Its subcellular location is the cytoplasm. It functions in the pathway protein biosynthesis; polypeptide chain elongation. In terms of biological role, involved in peptide bond synthesis. Alleviates ribosome stalling that occurs when 3 or more consecutive Pro residues or the sequence PPG is present in a protein, possibly by augmenting the peptidyl transferase activity of the ribosome. Modification of Lys-34 is required for alleviation. This chain is Elongation factor P, found in Vibrio campbellii (strain ATCC BAA-1116).